The primary structure comprises 476 residues: MTILAPVTKSESSTDPRDPLARLENLFDPGTTVPLHARDKSGVLAASGNIDGVRTIAYCSDATVMGGAMGVDGCKHLVKAIDTAIEEESPIVGLWHSGGARLAEGVEALHAVGLVFEAMVRASGLIPQISVVLGFAAGGAAYGPALTDVVIMAPEGRVFVTGPDVVRSVTGEQVDMVSLGGPDTHTKKSGVAHIAAHDEADALHRARRLVSMMCEQGEFDQRAAELGDSDLRAMMPASAKRAYDVRPIVHEMLDNVEGESSFEELQGNYARSIVTGFGRMAGRTVGVIANNPLRLGCLNSESAEKAARFVRLCNAFGVPLVVVVDVPGYLPGVSMEWEGVVRRGAKLLHAFAEATVPRVTVVTRKIYGGAYIAMNSRALGATAVFAWPNSEVAVMGAKAAVGILHKRALAAAPDDEREALHDRLAAEHEAIAGGVDRRCRNRRRRRGNRPGEDSQHRHAALASAPSVRARHKNIPL.

Positions 1-225 constitute a CoA carboxyltransferase N-terminal domain; the sequence is MTILAPVTKS…QGEFDQRAAE (225 aa). The segment at 1-476 is carboxyltransferase; that stretch reads MTILAPVTKS…VRARHKNIPL (476 aa). The CoA carboxyltransferase C-terminal domain maps to 226 to 476; that stretch reads LGDSDLRAMM…VRARHKNIPL (251 aa). The span at 439 to 448 shows a compositional bias: basic residues; sequence CRNRRRRRGN. The segment at 439-476 is disordered; it reads CRNRRRRRGNRPGEDSQHRHAALASAPSVRARHKNIPL.

This sequence belongs to the AccD/PCCB family. As to quaternary structure, probably a dodecamer composed of six biotin-containing alpha subunits and six beta subunits.

The enzyme catalyses propanoyl-CoA + hydrogencarbonate + ATP = (S)-methylmalonyl-CoA + ADP + phosphate + H(+). It participates in metabolic intermediate metabolism; propanoyl-CoA degradation; succinyl-CoA from propanoyl-CoA: step 1/3. The polypeptide is Propionyl-CoA carboxylase beta chain (pccB) (Rhodococcus erythropolis (Arthrobacter picolinophilus)).